A 237-amino-acid polypeptide reads, in one-letter code: Uridylate kinase (237 aa).

Residue 12–15 (KLSG) participates in ATP binding. Residues 20–25 (GEDGLG) form an involved in allosteric activation by GTP region. Gly-54 is a binding site for UMP. Positions 55 and 59 each coordinate ATP. UMP is bound by residues Asp-74 and 135–142 (TGNPFFTT). Positions 162, 168, and 171 each coordinate ATP.

It belongs to the UMP kinase family. As to quaternary structure, homohexamer.

The protein resides in the cytoplasm. The catalysed reaction is UMP + ATP = UDP + ADP. It participates in pyrimidine metabolism; CTP biosynthesis via de novo pathway; UDP from UMP (UMPK route): step 1/1. Its activity is regulated as follows. Allosterically activated by GTP. Inhibited by UTP. In terms of biological role, catalyzes the reversible phosphorylation of UMP to UDP. This chain is Uridylate kinase, found in Haemophilus influenzae (strain PittEE).